The following is a 74-amino-acid chain: MSKLTNVVIFIVFFLGMMAKETQGQHICHQILLNNNCDGATCTSLCDKQLQGTGQCYKTVDKRFICLCNYLCRT.

Residues 1-24 (MSKLTNVVIFIVFFLGMMAKETQG) form the signal peptide. Disulfide bonds link Cys28-Cys72, Cys37-Cys56, Cys42-Cys66, and Cys46-Cys68.

It belongs to the DEFL family.

It localises to the secreted. This Arabidopsis thaliana (Mouse-ear cress) protein is Putative defensin-like protein 128 (LCR8).